Consider the following 122-residue polypeptide: Urease subunit beta (122 aa).

Residues 92 to 122 (GLRPEYAGELDGRGHEPTAPNYGEKGQGHFE) are disordered.

This sequence belongs to the urease beta subunit family. In terms of assembly, heterotrimer of UreA (gamma), UreB (beta) and UreC (alpha) subunits. Three heterotrimers associate to form the active enzyme.

It is found in the cytoplasm. It carries out the reaction urea + 2 H2O + H(+) = hydrogencarbonate + 2 NH4(+). It functions in the pathway nitrogen metabolism; urea degradation; CO(2) and NH(3) from urea (urease route): step 1/1. This Saccharopolyspora erythraea (strain ATCC 11635 / DSM 40517 / JCM 4748 / NBRC 13426 / NCIMB 8594 / NRRL 2338) protein is Urease subunit beta.